A 353-amino-acid chain; its full sequence is Photosystem II protein D1 (353 aa).

At threonine 2 the chain carries N-acetylthreonine. Threonine 2 is subject to Phosphothreonine. The next 3 helical transmembrane spans lie at 29–46, 118–133, and 142–156; these read YIGW…TATA, HFLL…EWEL, and WIAV…AAAA. Histidine 118 provides a ligand contact to chlorophyll a. Tyrosine 126 provides a ligand contact to pheophytin a. The [CaMn4O5] cluster site is built by aspartate 170 and glutamate 189. The helical transmembrane segment at 197 to 218 threads the bilayer; it reads FHMLGVAGVFGGSLFSAMHGSL. Histidine 198 contacts chlorophyll a. A quinone-binding positions include histidine 215 and 264-265; that span reads SF. Position 215 (histidine 215) interacts with Fe cation. Histidine 272 is a binding site for Fe cation. A helical transmembrane segment spans residues 274 to 288; it reads FLAAWPVVGIWFTAL. Residues histidine 332, glutamate 333, aspartate 342, and alanine 344 each contribute to the [CaMn4O5] cluster site. The propeptide occupies 345–353; sequence SVEAPSVNG.

Belongs to the reaction center PufL/M/PsbA/D family. In terms of assembly, PSII is composed of 1 copy each of membrane proteins PsbA, PsbB, PsbC, PsbD, PsbE, PsbF, PsbH, PsbI, PsbJ, PsbK, PsbL, PsbM, PsbT, PsbX, PsbY, PsbZ, Psb30/Ycf12, at least 3 peripheral proteins of the oxygen-evolving complex and a large number of cofactors. It forms dimeric complexes. Requires The D1/D2 heterodimer binds P680, chlorophylls that are the primary electron donor of PSII, and subsequent electron acceptors. It shares a non-heme iron and each subunit binds pheophytin, quinone, additional chlorophylls, carotenoids and lipids. D1 provides most of the ligands for the Mn4-Ca-O5 cluster of the oxygen-evolving complex (OEC). There is also a Cl(-1) ion associated with D1 and D2, which is required for oxygen evolution. The PSII complex binds additional chlorophylls, carotenoids and specific lipids. as cofactor. Tyr-161 forms a radical intermediate that is referred to as redox-active TyrZ, YZ or Y-Z. Post-translationally, C-terminally processed by CTPA; processing is essential to allow assembly of the oxygen-evolving complex and thus photosynthetic growth.

It localises to the plastid. The protein resides in the chloroplast thylakoid membrane. It catalyses the reaction 2 a plastoquinone + 4 hnu + 2 H2O = 2 a plastoquinol + O2. Photosystem II (PSII) is a light-driven water:plastoquinone oxidoreductase that uses light energy to abstract electrons from H(2)O, generating O(2) and a proton gradient subsequently used for ATP formation. It consists of a core antenna complex that captures photons, and an electron transfer chain that converts photonic excitation into a charge separation. The D1/D2 (PsbA/PsbD) reaction center heterodimer binds P680, the primary electron donor of PSII as well as several subsequent electron acceptors. The polypeptide is Photosystem II protein D1 (Huperzia lucidula (Shining clubmoss)).